The primary structure comprises 180 residues: Inner membrane-spanning protein YciB (180 aa).

A run of 5 helical transmembrane segments spans residues 10 to 30, 47 to 67, 74 to 94, 121 to 141, and 151 to 171; these read IIAF…GVLM, ITTR…VTLL, IKMK…GGLI, YAWI…AEFW, and VFGI…YMYH.

It belongs to the YciB family.

It is found in the cell inner membrane. Functionally, plays a role in cell envelope biogenesis, maintenance of cell envelope integrity and membrane homeostasis. This chain is Inner membrane-spanning protein YciB, found in Idiomarina loihiensis (strain ATCC BAA-735 / DSM 15497 / L2-TR).